We begin with the raw amino-acid sequence, 144 residues long: Actin-associated protein FAM107A (144 aa).

The stretch at 70–90 forms a coiled coil; that stretch reads VLEHRRRNQLIKKKEEELEAK. Residues 74 to 84 carry the Nuclear localization signal motif; that stretch reads RRRNQLIKKKE. The tract at residues 104–123 is disordered; it reads QQRLNQLENPPQRDEDHAPE. Positions 114–123 are enriched in basic and acidic residues; sequence PQRDEDHAPE.

In terms of assembly, interacts with ACTB. Interacts with F-actin. Interacts with PRDX1. Interacts with COMMD1; this interaction stabilizes COMMD1 in the nucleus. Interacts with MAP1A. Expressed in septum, the neocortex, the CA3 region of the hippocampus and the cerebellum (at protein level).

It is found in the nucleus. Its subcellular location is the cytoplasm. It localises to the cytoskeleton. The protein resides in the stress fiber. The protein localises to the cell junction. It is found in the focal adhesion. Its subcellular location is the cell projection. It localises to the ruffle membrane. The protein resides in the synapse. Functionally, stress-inducible actin-binding protein that plays a role in synaptic and cognitive functions by modulating actin filamentous (F-actin) dynamics. Mediates polymerization of globular actin to F-actin. Also binds to, stabilizes and bundles F-actin. Involved in synaptic function by regulating neurite outgrowth in an actin-dependent manner and for the acquisition of hippocampus-dependent cognitive function, such as learning and long-term memory. Plays a role in the actin and microtubule cytoskeleton organization; negatively regulates focal adhesion (FA) assembly promoting malignant glial cell migration in an actin-, microtubule- and MAP1A-dependent manner. Also involved in neuroblastoma G1/S phase cell cycle progression and cell proliferation inhibition by stimulating ubiquitination of NF-kappa-B subunit RELA and NF-kappa-B degradation in a COMMD1- and actin-dependent manner. May play a role in tumor development. This Mus musculus (Mouse) protein is Actin-associated protein FAM107A.